An 83-amino-acid polypeptide reads, in one-letter code: Large ribosomal subunit protein eL31 (83 aa).

Belongs to the eukaryotic ribosomal protein eL31 family.

This chain is Large ribosomal subunit protein eL31, found in Methanococcus vannielii (strain ATCC 35089 / DSM 1224 / JCM 13029 / OCM 148 / SB).